The sequence spans 115 residues: Large ribosomal subunit protein bL19 (115 aa).

Belongs to the bacterial ribosomal protein bL19 family.

Functionally, this protein is located at the 30S-50S ribosomal subunit interface and may play a role in the structure and function of the aminoacyl-tRNA binding site. The chain is Large ribosomal subunit protein bL19 from Streptococcus equi subsp. equi (strain 4047).